A 115-amino-acid chain; its full sequence is MAFALRFFTCLVLTVCIVASVDAAISCGTVAGSLAPCATYLSKGGLVPPSCCAGVKTLNSMAKTTPDRQQACRCIQSTAKSISGLNPSLASGLPGKCGVSIPYPISMSTNCNNIK.

The signal sequence occupies residues 1 to 23; sequence MAFALRFFTCLVLTVCIVASVDA. 4 cysteine pairs are disulfide-bonded: Cys27-Cys74, Cys37-Cys51, Cys52-Cys97, and Cys72-Cys111.

Belongs to the plant LTP family.

Functionally, plant non-specific lipid-transfer proteins transfer phospholipids as well as galactolipids across membranes. May play a role in wax or cutin deposition in the cell walls of expanding epidermal cells and certain secretory tissues. In Arabidopsis thaliana (Mouse-ear cress), this protein is Non-specific lipid-transfer protein 3 (LTP3).